The following is a 343-amino-acid chain: Beta-ketoacyl-[acyl-carrier-protein] synthase III 1 (343 aa).

Catalysis depends on residues Cys-122 and His-268. Residues 269-273 (QANVR) are ACP-binding. The active site involves Asn-299.

The protein belongs to the thiolase-like superfamily. FabH family. As to quaternary structure, homodimer.

The protein localises to the cytoplasm. The catalysed reaction is malonyl-[ACP] + acetyl-CoA + H(+) = 3-oxobutanoyl-[ACP] + CO2 + CoA. The protein operates within lipid metabolism; fatty acid biosynthesis. Its function is as follows. Essential enzyme that catalyzes the condensation reaction of fatty acid synthesis by the addition to an acyl acceptor of two carbons from malonyl-ACP. Catalyzes the first condensation reaction which initiates fatty acid synthesis and may therefore play a role in governing the total rate of fatty acid production. Possesses both acetoacetyl-ACP synthase and acetyl transacylase activities. Its substrate specificity determines the biosynthesis of branched-chain of fatty acids. The polypeptide is Beta-ketoacyl-[acyl-carrier-protein] synthase III 1 (Streptomyces coelicolor (strain ATCC BAA-471 / A3(2) / M145)).